The sequence spans 489 residues: Leukocyte immunoglobulin-like receptor subfamily A member 1 (489 aa).

The N-terminal stretch at 1–16 (MTPIVTVLICLRLSLG) is a signal peptide. Topologically, residues 17-461 (PRTHVQAGTL…SHPQDYTVEN (445 aa)) are extracellular. 4 consecutive Ig-like C2-type domains span residues 27-116 (PKPT…PLEL), 119-224 (TGAY…GVSK), 226-315 (PSLS…DPLD), and 326-415 (PFIS…SDSL). A disulfide bridge connects residues C49 and C98. An N-linked (GlcNAc...) asparagine glycan is attached at N140. Disulfide bonds link C145–C197, C157–C167, and C246–C297. N-linked (GlcNAc...) asparagine glycosylation is found at N281, N302, and N341. C346 and C397 are disulfide-bonded. Residues 425 to 453 (TLSPPQNKSDSKAGAANTLSPSQNKTASH) form a disordered region. N431 and N448 each carry an N-linked (GlcNAc...) asparagine glycan. Positions 441–453 (NTLSPSQNKTASH) are enriched in polar residues. Residues 462–482 (LIRMGIAGLVLVVLGILLFEA) form a helical membrane-spanning segment. Over 483–489 (QHSQRSL) the chain is Cytoplasmic.

Detected in monocytes and B-cells.

The protein resides in the membrane. Its function is as follows. May act as receptor for class I MHC antigens. This is Leukocyte immunoglobulin-like receptor subfamily A member 1 (LILRA1) from Homo sapiens (Human).